Here is a 571-residue protein sequence, read N- to C-terminus: Proline--tRNA ligase (571 aa).

It belongs to the class-II aminoacyl-tRNA synthetase family. ProS type 1 subfamily. In terms of assembly, homodimer.

The protein localises to the cytoplasm. It catalyses the reaction tRNA(Pro) + L-proline + ATP = L-prolyl-tRNA(Pro) + AMP + diphosphate. In terms of biological role, catalyzes the attachment of proline to tRNA(Pro) in a two-step reaction: proline is first activated by ATP to form Pro-AMP and then transferred to the acceptor end of tRNA(Pro). As ProRS can inadvertently accommodate and process non-cognate amino acids such as alanine and cysteine, to avoid such errors it has two additional distinct editing activities against alanine. One activity is designated as 'pretransfer' editing and involves the tRNA(Pro)-independent hydrolysis of activated Ala-AMP. The other activity is designated 'posttransfer' editing and involves deacylation of mischarged Ala-tRNA(Pro). The misacylated Cys-tRNA(Pro) is not edited by ProRS. This Acinetobacter baumannii (strain AB307-0294) protein is Proline--tRNA ligase.